The primary structure comprises 427 residues: UDP-N-acetylglucosamine 1-carboxyvinyltransferase (427 aa).

Phosphoenolpyruvate is bound at residue 22 to 23; it reads KN. UDP-N-acetyl-alpha-D-glucosamine is bound at residue arginine 99. Cysteine 123 functions as the Proton donor in the catalytic mechanism. Cysteine 123 carries the post-translational modification 2-(S-cysteinyl)pyruvic acid O-phosphothioketal. UDP-N-acetyl-alpha-D-glucosamine-binding positions include 128–132, aspartate 313, and isoleucine 335; that span reads RPIDL.

The protein belongs to the EPSP synthase family. MurA subfamily.

It localises to the cytoplasm. The catalysed reaction is phosphoenolpyruvate + UDP-N-acetyl-alpha-D-glucosamine = UDP-N-acetyl-3-O-(1-carboxyvinyl)-alpha-D-glucosamine + phosphate. It functions in the pathway cell wall biogenesis; peptidoglycan biosynthesis. Functionally, cell wall formation. Adds enolpyruvyl to UDP-N-acetylglucosamine. In Sphingopyxis alaskensis (strain DSM 13593 / LMG 18877 / RB2256) (Sphingomonas alaskensis), this protein is UDP-N-acetylglucosamine 1-carboxyvinyltransferase.